The primary structure comprises 80 residues: MPKRVLQGVVVSDKNDKTVVLKVERRYSHPLLQKTVRQSKKYKAHDENNQFKVGDFVSIQESAPISKDKRWVVLTSEAAG.

The protein belongs to the universal ribosomal protein uS17 family. In terms of assembly, part of the 30S ribosomal subunit.

Its function is as follows. One of the primary rRNA binding proteins, it binds specifically to the 5'-end of 16S ribosomal RNA. The sequence is that of Small ribosomal subunit protein uS17 from Brucella suis (strain ATCC 23445 / NCTC 10510).